A 478-amino-acid polypeptide reads, in one-letter code: ATP-dependent RNA helicase DDX19A (478 aa).

An N-acetylalanine modification is found at alanine 2. Residues 2–299 (ATDSWALAVD…DPNIIKLKRE (298 aa)) are N-terminal lobe. Lysine 26 participates in a covalent cross-link: Glycyl lysine isopeptide (Lys-Gly) (interchain with G-Cter in SUMO1); alternate. A Glycyl lysine isopeptide (Lys-Gly) (interchain with G-Cter in SUMO2); alternate cross-link involves residue lysine 26. The tract at residues 34 to 53 (TNGVIKTSTTAEKTEEEEKE) is disordered. Threonine 42 carries the phosphothreonine modification. Residues 54 to 67 (DRAAQSLLNKLIRS) are N-terminal helix. The Q motif signature appears at 91-119 (KSFEELRLKPQLLQGVYAMGFNRPSKIQE). Residues glutamine 118 and 137-144 (SQSGTGKT) contribute to the ATP site. The 171-residue stretch at 124–294 (MMLAEPPQNL…QKVVPDPNII (171 aa)) folds into the Helicase ATP-binding domain. The DEAD box motif lies at 241–244 (DEAD). The tract at residues 300–478 (EETLDTIKQY…DLDEIEKIAN (179 aa)) is C-terminal lobe. Residues 305-473 (TIKQYYVLCN…RLDTDDLDEI (169 aa)) form the Helicase C-terminal domain. The ATP site is built by arginine 428 and arginine 431.

Belongs to the DEAD box helicase family. DDX19/DBP5 subfamily. In terms of tissue distribution, found in testis, heart, brain, liver, skeletal muscle, and kidney.

The protein localises to the cytoplasm. It localises to the nucleus. The protein resides in the nucleoplasm. It catalyses the reaction ATP + H2O = ADP + phosphate + H(+). Its function is as follows. ATP-dependent RNA helicase involved in mRNA export from the nucleus. Rather than unwinding RNA duplexes, DDX19 functions as a remodeler of ribonucleoprotein particles, whereby proteins bound to nuclear mRNA are dissociated and replaced by cytoplasmic mRNA binding proteins. This Mus musculus (Mouse) protein is ATP-dependent RNA helicase DDX19A (Ddx19a).